A 622-amino-acid polypeptide reads, in one-letter code: WD repeat-containing protein 46 (622 aa).

The tract at residues 1–135 (METAPKPGRG…KTQSKLEKAE (135 aa)) is disordered. Ser41 is modified (phosphoserine). Residues 106-118 (EEARKFCRIDKSK) are compositionally biased toward basic and acidic residues. WD repeat units lie at residues 192-233 (LRQF…CEIN), 234-271 (VMEA…LHCI), 314-353 (VRAG…PLAK), 356-395 (CHRG…QPLS), and 398-435 (TLPQ…SPPS). The segment at 547 to 622 (AAFQPKAKQK…AREGGLQVDP (76 aa)) is disordered. The segment covering 571–582 (VMDQEHRDKVRQ) has biased composition (basic and acidic residues).

In terms of assembly, part of the small subunit (SSU) processome, composed of more than 70 proteins and the RNA chaperone small nucleolar RNA (snoRNA) U3. Interacts with DDX21, NCL, NOP2 and EBNA1BP2.

It localises to the nucleus. It is found in the nucleolus. In terms of biological role, scaffold component of the nucleolar structure. Required for localization of DDX21 and NCL to the granular compartment of the nucleolus. Part of the small subunit (SSU) processome, first precursor of the small eukaryotic ribosomal subunit. During the assembly of the SSU processome in the nucleolus, many ribosome biogenesis factors, an RNA chaperone and ribosomal proteins associate with the nascent pre-rRNA and work in concert to generate RNA folding, modifications, rearrangements and cleavage as well as targeted degradation of pre-ribosomal RNA by the RNA exosome. The protein is WD repeat-containing protein 46 (Wdr46) of Mus musculus (Mouse).